Consider the following 462-residue polypeptide: uncharacterized protein (462 aa).

One can recognise a TRAM domain in the interval 12-70; sequence MLKKNDIIQVAISDLSHEGAGVAKHDGFVFFVDNALPEEVIDMRVLKVNKNSGFGKVEA. Residues Q294, Y323, E344, and D392 each contribute to the S-adenosyl-L-methionine site. C419 (nucleophile) is an active-site residue.

It belongs to the class I-like SAM-binding methyltransferase superfamily. RNA M5U methyltransferase family.

This is an uncharacterized protein from Streptococcus pyogenes serotype M3 (strain ATCC BAA-595 / MGAS315).